A 340-amino-acid polypeptide reads, in one-letter code: Deubiquitinase SseL (340 aa).

His-223 is a catalytic residue. The active-site Nucleophile is Cys-285.

The protein belongs to the peptidase C79 family.

It localises to the secreted. The protein resides in the host cytoplasm. In terms of biological role, effector proteins function to alter host cell physiology and promote bacterial survival in host tissues. This protease targets the host cell ubiquitin pathway by acting as a deubiquitinase in infected host cells. The chain is Deubiquitinase SseL (sseL) from Salmonella paratyphi A (strain ATCC 9150 / SARB42).